Consider the following 545-residue polypeptide: Ubiquitin carboxyl-terminal hydrolase 17-like protein C (545 aa).

The 298-residue stretch at 51 to 348 (CGLQNTGNSC…NAYVLFYVQQ (298 aa)) folds into the USP domain. The active-site Nucleophile is Cys60. His307 (proton acceptor) is an active-site residue. Disordered stretches follow at residues 368-442 (DPEY…QKLG) and 489-539 (WGRD…KQGQ). Residues 374–385 (KKSRRKKHKKKS) show a composition bias toward basic residues. 2 stretches are compositionally biased toward basic and acidic residues: residues 393 to 404 (EPCKNREKRATK) and 489 to 505 (WGRDAPDKENQPWHNAD). Polar residues predominate over residues 508 to 519 (LTSQDPVNTGQL). Positions 524 to 537 (GRRRSKKGKNKNKQ) are enriched in basic residues.

It belongs to the peptidase C19 family. USP17 subfamily. Expressed in T cells.

Its subcellular location is the nucleus. It is found in the endoplasmic reticulum. It catalyses the reaction Thiol-dependent hydrolysis of ester, thioester, amide, peptide and isopeptide bonds formed by the C-terminal Gly of ubiquitin (a 76-residue protein attached to proteins as an intracellular targeting signal).. Functionally, deubiquitinating enzyme that removes conjugated ubiquitin from specific proteins to regulate different cellular processes. Important for preimplantation stage embryonic development. The protein is Ubiquitin carboxyl-terminal hydrolase 17-like protein C of Mus musculus (Mouse).